The following is a 442-amino-acid chain: Tryptophan synthase beta chain 2 (442 aa).

Lysine 122 is subject to N6-(pyridoxal phosphate)lysine.

This sequence belongs to the TrpB family. In terms of assembly, tetramer of two alpha and two beta chains. Pyridoxal 5'-phosphate serves as cofactor.

It catalyses the reaction (1S,2R)-1-C-(indol-3-yl)glycerol 3-phosphate + L-serine = D-glyceraldehyde 3-phosphate + L-tryptophan + H2O. It participates in amino-acid biosynthesis; L-tryptophan biosynthesis; L-tryptophan from chorismate: step 5/5. Functionally, the beta subunit is responsible for the synthesis of L-tryptophan from indole and L-serine. This is Tryptophan synthase beta chain 2 (trpB2) from Methanosarcina acetivorans (strain ATCC 35395 / DSM 2834 / JCM 12185 / C2A).